The following is a 126-amino-acid chain: Histone H2B type 3-B (126 aa).

Residues 1-12 (MPDPSKSAPAPK) show a composition bias toward low complexity. Residues 1 to 35 (MPDPSKSAPAPKKGSKKAVTKAQKKDGKKRKRGRK) are disordered. The residue at position 2 (proline 2) is an N-acetylproline. Lysine 6 bears the N6-(2-hydroxyisobutyryl)lysine; alternate mark. Lysine 6 bears the N6-(beta-hydroxybutyryl)lysine; alternate mark. An N6-acetyllysine; alternate modification is found at lysine 6. Lysine 6 carries the N6-butyryllysine; alternate modification. At lysine 6 the chain carries N6-crotonyllysine; alternate. The residue at position 6 (lysine 6) is an N6-lactoyllysine; alternate. Lysine 6 is covalently cross-linked (Glycyl lysine isopeptide (Lys-Gly) (interchain with G-Cter in SUMO2); alternate). Serine 7 carries the ADP-ribosylserine modification. N6-(beta-hydroxybutyryl)lysine; alternate is present on lysine 12. Residues lysine 12 and lysine 13 each carry the N6-acetyllysine; alternate modification. Residues lysine 12 and lysine 13 each carry the N6-crotonyllysine; alternate modification. Lysine 12 carries the N6-lactoyllysine; alternate modification. Lysine 13 is modified (N6-(2-hydroxyisobutyryl)lysine; alternate). At serine 15 the chain carries Phosphoserine; by STK4/MST1. N6-acetyllysine; alternate is present on residues lysine 16, lysine 17, lysine 21, and lysine 24. 4 positions are modified to N6-crotonyllysine; alternate: lysine 16, lysine 17, lysine 21, and lysine 24. Lysine 16, lysine 17, lysine 21, and lysine 24 each carry N6-lactoyllysine; alternate. N6-(beta-hydroxybutyryl)lysine; alternate occurs at positions 17 and 21. Lysine 17 carries the post-translational modification N6-glutaryllysine; alternate. N6-(2-hydroxyisobutyryl)lysine; alternate occurs at positions 21 and 24. Residue lysine 21 is modified to N6-butyryllysine; alternate. Residue lysine 21 forms a Glycyl lysine isopeptide (Lys-Gly) (interchain with G-Cter in SUMO2); alternate linkage. An N6-(2-hydroxyisobutyryl)lysine modification is found at lysine 25. Lysine 35 is subject to N6-(2-hydroxyisobutyryl)lysine; alternate. Position 35 is an N6-(beta-hydroxybutyryl)lysine; alternate (lysine 35). Lysine 35 carries the N6-crotonyllysine; alternate modification. The residue at position 35 (lysine 35) is an N6-glutaryllysine; alternate. Position 35 is an N6-succinyllysine; alternate (lysine 35). Lysine 35 is covalently cross-linked (Glycyl lysine isopeptide (Lys-Gly) (interchain with G-Cter in ubiquitin); alternate). The residue at position 36 (glutamate 36) is a PolyADP-ribosyl glutamic acid. Serine 37 carries the phosphoserine; by AMPK modification. An N6-(2-hydroxyisobutyryl)lysine; alternate mark is found at lysine 44, lysine 47, and lysine 58. At lysine 44 the chain carries N6-lactoyllysine; alternate. Lysine 44 and lysine 47 each carry N6-glutaryllysine; alternate. Residue lysine 47 is modified to N6-methyllysine; alternate. N6,N6-dimethyllysine; alternate is present on lysine 58. Residue arginine 80 is modified to Dimethylated arginine. Position 86 is an N6-(2-hydroxyisobutyryl)lysine; alternate (lysine 86). Lysine 86 is subject to N6-(beta-hydroxybutyryl)lysine; alternate. N6-acetyllysine; alternate is present on lysine 86. Lysine 86 is modified (N6-lactoyllysine; alternate). Lysine 86 is modified (N6,N6,N6-trimethyllysine; alternate). 2 positions are modified to omega-N-methylarginine: arginine 87 and arginine 93. Lysine 109 carries the post-translational modification N6-(2-hydroxyisobutyryl)lysine; alternate. N6-lactoyllysine; alternate is present on lysine 109. The residue at position 109 (lysine 109) is an N6-glutaryllysine; alternate. The residue at position 109 (lysine 109) is an N6-methyllysine; alternate. A glycan (O-linked (GlcNAc) serine) is linked at serine 113. Position 116 is a phosphothreonine (threonine 116). An N6-(2-hydroxyisobutyryl)lysine; alternate mark is found at lysine 117 and lysine 121. N6-(beta-hydroxybutyryl)lysine; alternate is present on residues lysine 117 and lysine 121. 2 positions are modified to N6-lactoyllysine; alternate: lysine 117 and lysine 121. N6-glutaryllysine; alternate occurs at positions 117 and 121. 2 positions are modified to N6-succinyllysine; alternate: lysine 117 and lysine 121. Lysine 117 is modified (N6-malonyllysine; alternate). Lysine 117 carries the post-translational modification N6-methylated lysine; alternate. Lysine 121 participates in a covalent cross-link: Glycyl lysine isopeptide (Lys-Gly) (interchain with G-Cter in ubiquitin); alternate.

This sequence belongs to the histone H2B family. The nucleosome is a histone octamer containing two molecules each of H2A, H2B, H3 and H4 assembled in one H3-H4 heterotetramer and two H2A-H2B heterodimers. The octamer wraps approximately 147 bp of DNA. In terms of processing, monoubiquitination at Lys-35 (H2BK34Ub) by the MSL1/MSL2 dimer is required for histone H3 'Lys-4' (H3K4me) and 'Lys-79' (H3K79me) methylation and transcription activation at specific gene loci, such as HOXA9 and MEIS1 loci. Similarly, monoubiquitination at Lys-121 (H2BK120Ub) by the RNF20/40 complex gives a specific tag for epigenetic transcriptional activation and is also prerequisite for histone H3 'Lys-4' and 'Lys-79' methylation. It also functions cooperatively with the FACT dimer to stimulate elongation by RNA polymerase II. H2BK120Ub also acts as a regulator of mRNA splicing: deubiquitination by USP49 is required for efficient cotranscriptional splicing of a large set of exons. Post-translationally, phosphorylation at Ser-37 (H2BS36ph) by AMPK in response to stress promotes transcription. Phosphorylated on Ser-15 (H2BS14ph) by STK4/MST1 during apoptosis; which facilitates apoptotic chromatin condensation. Also phosphorylated on Ser-15 in response to DNA double strand breaks (DSBs), and in correlation with somatic hypermutation and immunoglobulin class-switch recombination. GlcNAcylation at Ser-113 promotes monoubiquitination of Lys-121. It fluctuates in response to extracellular glucose, and associates with transcribed genes. In terms of processing, ADP-ribosylated by PARP1 or PARP2 on Ser-7 (H2BS6ADPr) in response to DNA damage. H2BS6ADPr promotes recruitment of CHD1L. Poly ADP-ribosylation on Glu-36 (H2BE35ADPr) by PARP1 regulates adipogenesis: it inhibits phosphorylation at Ser-37 (H2BS36ph), thereby blocking expression of pro-adipogenetic genes. Post-translationally, crotonylation (Kcr) is specifically present in male germ cells and marks testis-specific genes in post-meiotic cells, including X-linked genes that escape sex chromosome inactivation in haploid cells. Crotonylation marks active promoters and enhancers and confers resistance to transcriptional repressors. It is also associated with post-meiotically activated genes on autosomes. Lactylated in macrophages by EP300/P300 by using lactoyl-CoA directly derived from endogenous or exogenous lactate, leading to stimulates gene transcription.

Its subcellular location is the nucleus. The protein localises to the chromosome. In terms of biological role, core component of nucleosome. Nucleosomes wrap and compact DNA into chromatin, limiting DNA accessibility to the cellular machineries which require DNA as a template. Histones thereby play a central role in transcription regulation, DNA repair, DNA replication and chromosomal stability. DNA accessibility is regulated via a complex set of post-translational modifications of histones, also called histone code, and nucleosome remodeling. This is Histone H2B type 3-B from Homo sapiens (Human).